We begin with the raw amino-acid sequence, 318 residues long: Ribosomal lysine N-methyltransferase 5 (318 aa).

S-adenosyl-L-methionine is bound by residues Trp95, 139-141, Asp161, Trp214, and Met241; that span reads GSG.

It belongs to the class I-like SAM-binding methyltransferase superfamily. RKM5 family.

S-adenosyl-L-methionine-dependent protein-lysine N-methyltransferase that methylates 60S ribosomal protein L1. The sequence is that of Ribosomal lysine N-methyltransferase 5 (RKM5) from Zygosaccharomyces rouxii (strain ATCC 2623 / CBS 732 / NBRC 1130 / NCYC 568 / NRRL Y-229).